The chain runs to 153 residues: 3-hydroxyacyl-[acyl-carrier-protein] dehydratase FabZ (153 aa).

The active site involves His57.

Belongs to the thioester dehydratase family. FabZ subfamily.

The protein resides in the cytoplasm. The catalysed reaction is a (3R)-hydroxyacyl-[ACP] = a (2E)-enoyl-[ACP] + H2O. Its function is as follows. Involved in unsaturated fatty acids biosynthesis. Catalyzes the dehydration of short chain beta-hydroxyacyl-ACPs and long chain saturated and unsaturated beta-hydroxyacyl-ACPs. This chain is 3-hydroxyacyl-[acyl-carrier-protein] dehydratase FabZ, found in Aeromonas hydrophila subsp. hydrophila (strain ATCC 7966 / DSM 30187 / BCRC 13018 / CCUG 14551 / JCM 1027 / KCTC 2358 / NCIMB 9240 / NCTC 8049).